Reading from the N-terminus, the 91-residue chain is uncharacterized protein (91 aa).

The tract at residues 71 to 91 is disordered; that stretch reads EANDRPSKKCGSGNLRVEKLV.

This is an uncharacterized protein from Archaeoglobus fulgidus (strain ATCC 49558 / DSM 4304 / JCM 9628 / NBRC 100126 / VC-16).